Reading from the N-terminus, the 193-residue chain is Pyridoxal 5'-phosphate synthase subunit PdxT (193 aa).

50–52 (GES) is an L-glutamine binding site. Cys82 (nucleophile) is an active-site residue. Residues Arg109 and 136 to 137 (IR) contribute to the L-glutamine site. Active-site charge relay system residues include His172 and Glu174.

It belongs to the glutaminase PdxT/SNO family. In the presence of PdxS, forms a dodecamer of heterodimers. Only shows activity in the heterodimer.

It carries out the reaction aldehydo-D-ribose 5-phosphate + D-glyceraldehyde 3-phosphate + L-glutamine = pyridoxal 5'-phosphate + L-glutamate + phosphate + 3 H2O + H(+). The catalysed reaction is L-glutamine + H2O = L-glutamate + NH4(+). The protein operates within cofactor biosynthesis; pyridoxal 5'-phosphate biosynthesis. Functionally, catalyzes the hydrolysis of glutamine to glutamate and ammonia as part of the biosynthesis of pyridoxal 5'-phosphate. The resulting ammonia molecule is channeled to the active site of PdxS. This is Pyridoxal 5'-phosphate synthase subunit PdxT from Streptococcus pneumoniae serotype 19F (strain G54).